A 412-amino-acid polypeptide reads, in one-letter code: Stachydrine N-demethylase (412 aa).

The Rieske domain occupies 45 to 150 (LYAVPVCQLA…LRNLDGLIYI (106 aa)). [2Fe-2S] cluster is bound by residues Cys-86, His-88, Cys-106, and His-109. Fe cation contacts are provided by His-204, His-209, and Asp-360.

This sequence belongs to the bacterial ring-hydroxylating dioxygenase alpha subunit family. Homotrimer. The system is probably composed of an oxygenase subunit (Stc2) and two reductase subunits (Stc3 and Stc4). The cofactor is [2Fe-2S] cluster. It depends on Fe cation as a cofactor.

It catalyses the reaction L-proline betaine + NADH + O2 + H(+) = N-methyl-L-proline + formaldehyde + NAD(+) + H2O. It carries out the reaction L-proline betaine + NADPH + O2 + H(+) = N-methyl-L-proline + formaldehyde + NADP(+) + H2O. Its function is as follows. Monooxygenase involved in the catabolism of stachydrine (L-proline betaine), a source of carbon and nitrogen. Part of a Rieske-type oxygenase system that catalyzes the demethylation of stachydrine to produce N-methyl-L-proline (monomethylproline). Stc2 is the catalytic subunit. This is Stachydrine N-demethylase from Rhizobium meliloti (strain 1021) (Ensifer meliloti).